The primary structure comprises 436 residues: Two-pore potassium channel 3 (436 aa).

Residues 1-148 (MANEGSDPLL…QKDPTETSRS (148 aa)) lie on the Cytoplasmic side of the membrane. A disordered region spans residues 62–117 (SHFIDSMKQPSPSSSSTAVNNPFSDSSTLDPLLPPPPPQPEPWLSDQTSSHCQGHA). The span at 71-92 (PSPSSSSTAVNNPFSDSSTLDP) shows a compositional bias: low complexity. The span at 93 to 102 (LLPPPPPQPE) shows a compositional bias: pro residues. Residues 149–169 (VVRQAFALLVVYLSLGVLIYW) form a helical membrane-spanning segment. An intramembrane region (pore-forming) is located at residues 185–204 (DGLYFCIVTMCTIGYGDITP). The chain crosses the membrane as a helical span at residues 212-232 (FSIMFVLVGFGFIDILLSGMV). Residues 233–274 (SYVLDLQESYMLDSAKRRDEPEKRRSYIIDVKKGRMRIRLKV) lie on the Cytoplasmic side of the membrane. Residues 275-295 (ALALGVVVLCIAVGVGIMHFI) traverse the membrane as a helical segment. The segment at residues 302 to 321 (DSFYLSVMSVTTVGYGDRAF) is an intramembrane region (pore-forming). Residues 328–348 (LFAAIWLLVSTLAVARAFLYL) traverse the membrane as a helical segment. At 349–436 (AEARVDKRNR…LDLLEGGSGD (88 aa)) the chain is on the cytoplasmic side. 2 consecutive EF-hand domains span residues 365–400 (LCET…EMEK) and 404–436 (KDIL…GSGD). 9 residues coordinate Ca(2+): D378, D380, N382, C384, E389, D417, N421, K423, and D428.

It belongs to the two pore domain potassium channel (TC 1.A.1.7) family. Homodimer. In terms of tissue distribution, expressed in roots, cotyledons, stems, hypocotyls, leaves and flowers. Detected in root tips and in mesophyll cells and guard cells of the leaves.

It is found in the vacuole membrane. It localises to the plastid. The protein localises to the chloroplast thylakoid membrane. Inhibited by barium, but not by tetraethylammonium. Functionally, two-pore potassium channel modulating the proton motive force (pmf) necessary to convert photochemical energy into physiological functions. Mediates the potassium efflux from the thylakoid lumen required for the regulation of the transmembrane electrical potential, the enhancement of the pH gradient for ATP synthesis, the regulation of electron flow, and pH-mediated photoprotective responses. Requires calcium for channel activity. This Arabidopsis thaliana (Mouse-ear cress) protein is Two-pore potassium channel 3.